The primary structure comprises 129 residues: MYEKIVIVLLLSGYISTQDVTEIIPHEISSKLPTQAGFISTEDPSFNTPSTRQDPSGTMYQHLPDGGQKARQQLVHIFSEPVIIGIIYAVMLGIIITILSIAFCIGQLTKKSSLPAQVASPEDVDPEVL.

A signal peptide spans 1–17 (MYEKIVIVLLLSGYIST). Glutamine 18 carries the pyrrolidone carboxylic acid modification. Topologically, residues 18–82 (QDVTEIIPHE…QLVHIFSEPV (65 aa)) are extracellular. O-linked (GalNAc...) serine glycans are attached at residues serine 29 and serine 30. Residue threonine 34 is glycosylated (O-linked (GalNAc...) threonine). Serine 40 carries O-linked (GalNAc...) serine glycosylation. 2 O-linked (GalNAc...) threonine glycosylation sites follow: threonine 41 and threonine 48. O-linked (GalNAc...) serine glycosylation occurs at serine 56. Residues 83 to 103 (IIGIIYAVMLGIIITILSIAF) form a helical membrane-spanning segment. At 104–129 (CIGQLTKKSSLPAQVASPEDVDPEVL) the chain is on the cytoplasmic side.

It belongs to the glycophorin-A family. As to quaternary structure, homodimer. Component of the ankyrin-1 complex in the erythrocyte, composed of ANK1, RHCE, RHAG, SLC4A1, EPB42, GYPA, GYPB and AQP1. Interacts with SLC4A1; a GYPA monomer is bound at each end of the SLC4A1 dimer forming a heterotetramer.

The protein localises to the membrane. Its function is as follows. Component of the ankyrin-1 complex, a multiprotein complex involved in the stability and shape of the erythrocyte membrane. Glycophorin A is the major intrinsic membrane protein of the erythrocyte. The N-terminal glycosylated segment, which lies outside the erythrocyte membrane, has MN blood group receptors. Appears to be important for the function of SLC4A1 and is required for high activity of SLC4A1. May be involved in translocation of SLC4A1 to the plasma membrane. The chain is Glycophorin-A from Canis lupus familiaris (Dog).